Consider the following 213-residue polypeptide: Elongation factor 1-beta (213 aa).

Residues 67–80 are compositionally biased toward low complexity; sequence AGKAPAASGSAAAA. Positions 67–88 are disordered; sequence AGKAPAASGSAAAAAEEEDDED.

It belongs to the EF-1-beta/EF-1-delta family. As to quaternary structure, EF-1 is composed of 4 subunits: alpha, beta, delta, and gamma.

In terms of biological role, EF-1-beta and EF-1-delta stimulate the exchange of GDP bound to EF-1-alpha to GTP. The chain is Elongation factor 1-beta (EFB1) from Candida albicans (strain WO-1) (Yeast).